A 1146-amino-acid chain; its full sequence is DNA polymerase II large subunit (1146 aa).

It belongs to the archaeal DNA polymerase II family. As to quaternary structure, heterodimer of a large subunit and a small subunit.

The enzyme catalyses DNA(n) + a 2'-deoxyribonucleoside 5'-triphosphate = DNA(n+1) + diphosphate. It carries out the reaction Exonucleolytic cleavage in the 3'- to 5'-direction to yield nucleoside 5'-phosphates.. In terms of biological role, possesses two activities: a DNA synthesis (polymerase) and an exonucleolytic activity that degrades single-stranded DNA in the 3'- to 5'-direction. Has a template-primer preference which is characteristic of a replicative DNA polymerase. This Methanosarcina barkeri (strain Fusaro / DSM 804) protein is DNA polymerase II large subunit.